Here is a 149-residue protein sequence, read N- to C-terminus: MKCPFCSHPETQVVETRVAEDGDFVRRRRQCGACDKRFTTYERPEVSFPNVVKKDGRRIEYDRSKLIGSFSIALRKRPVSTTQIDSAIERIEEKLLNLGQREVLSSRIGELVMRELKKLDKVAYIRFASVYRNFEDIDEFRALVDEVRK.

Residues 3–34 (CPFCSHPETQVVETRVAEDGDFVRRRRQCGAC) fold into a zinc finger. Positions 49 to 139 (PNVVKKDGRR…VYRNFEDIDE (91 aa)) constitute an ATP-cone domain.

It belongs to the NrdR family. It depends on Zn(2+) as a cofactor.

Functionally, negatively regulates transcription of bacterial ribonucleotide reductase nrd genes and operons by binding to NrdR-boxes. This is Transcriptional repressor NrdR from Paracidovorax citrulli (strain AAC00-1) (Acidovorax citrulli).